A 262-amino-acid chain; its full sequence is Phosphonates import ATP-binding protein PhnC (262 aa).

Residues 5 to 253 (ICVEQLSKTF…RFDHLYRSIN (249 aa)) enclose the ABC transporter domain. 37 to 44 (GPSGSGKS) lines the ATP pocket.

Belongs to the ABC transporter superfamily. Phosphonates importer (TC 3.A.1.9.1) family. As to quaternary structure, the complex is composed of two ATP-binding proteins (PhnC), two transmembrane proteins (PhnE) and a solute-binding protein (PhnD).

The protein localises to the cell inner membrane. The enzyme catalyses phosphonate(out) + ATP + H2O = phosphonate(in) + ADP + phosphate + H(+). Its function is as follows. Part of the ABC transporter complex PhnCDE involved in phosphonates import. Responsible for energy coupling to the transport system. This is Phosphonates import ATP-binding protein PhnC from Escherichia coli O157:H7.